Consider the following 424-residue polypeptide: GTPase Obg (424 aa).

Positions 1–158 (MFVDRAEVFV…RYISLELKIL (158 aa)) constitute an Obg domain. The disordered stretch occupies residues 21 to 42 (SFRREKYVPRGGPDGGDGGKGG). Over residues 32–42 (GPDGGDGGKGG) the composition is skewed to gly residues. In terms of domain architecture, OBG-type G spans 159 to 331 (ADVGLLGFPN…LMKEAAAMLT (173 aa)). Residues 165 to 172 (GFPNVGKS), 190 to 194 (FTTLS), 212 to 215 (DIPG), 282 to 285 (NKAD), and 312 to 314 (SAA) each bind GTP. Mg(2+) contacts are provided by Ser172 and Thr192. The region spanning 345–424 (KFIPEEKRFT…LNDFEFDYIL (80 aa)) is the OCT domain.

The protein belongs to the TRAFAC class OBG-HflX-like GTPase superfamily. OBG GTPase family. As to quaternary structure, monomer. Mg(2+) is required as a cofactor.

Its subcellular location is the cytoplasm. In terms of biological role, an essential GTPase which binds GTP, GDP and possibly (p)ppGpp with moderate affinity, with high nucleotide exchange rates and a fairly low GTP hydrolysis rate. Plays a role in control of the cell cycle, stress response, ribosome biogenesis and in those bacteria that undergo differentiation, in morphogenesis control. In Clostridium kluyveri (strain NBRC 12016), this protein is GTPase Obg.